The following is a 440-amino-acid chain: MEQLARLYHDHLRVLNQRVCEILSRENLSGLVIHSGQPHRQFLDDLDYPFKVNPHFKAWLPVIDNPNSWLVVNGTDKPLLIFYRPVDFWHKVADEPNEFWAEHVDIKFLTKADKVAEYLPADIDEWAYIGEHLDVADVLGFARRNPDSVLSYLNYHRATKTEYELACMRKANEIAVTGHQAAKTAFYNGASEFEILQVYLSAISQGENQVPYSSIVALNENSAILHYTALEHTAPAQRRSFLIDAGANFNGYASDITRSYAFEKNIFDDLITAIDNMQLQIINLMQPGVSYAQLHVETHYKLAQILLDFDIVSGDVQGLVEQGITSVFFPHGLGHMLGIQVHDMGGFLGDDKGAHIAVPEAHPFLRCTRELDVNQVLTIEPGVYIIDSLLNELKQDKRQSQINWNTVEVLRPFGGIRIEDNVIVHRDRIENMTRNWGLNR.

Residues D244, D255, H335, E380, and E419 each contribute to the Mn(2+) site.

The protein belongs to the peptidase M24B family. Bacterial-type prolidase subfamily. Mn(2+) serves as cofactor.

It carries out the reaction Xaa-L-Pro dipeptide + H2O = an L-alpha-amino acid + L-proline. Functionally, splits dipeptides with a prolyl residue in the C-terminal position. This is Xaa-Pro dipeptidase from Shewanella halifaxensis (strain HAW-EB4).